A 396-amino-acid polypeptide reads, in one-letter code: S-adenosylmethionine synthase 1 (396 aa).

Mg(2+) is bound at residue glutamate 12. Histidine 18 contacts ATP. Glutamate 46 contributes to the K(+) binding site. Residues glutamate 59 and glutamine 102 each coordinate L-methionine. ATP-binding positions include 170-172, 238-241, aspartate 249, 255-256, alanine 272, lysine 276, and lysine 280; these read DGK, SGRF, and RK. Residue aspartate 249 coordinates L-methionine. Lysine 280 contacts L-methionine.

The protein belongs to the AdoMet synthase family. Homotetramer. Mn(2+) is required as a cofactor. Requires Mg(2+) as cofactor. The cofactor is Co(2+). K(+) serves as cofactor.

It is found in the cytoplasm. The enzyme catalyses L-methionine + ATP + H2O = S-adenosyl-L-methionine + phosphate + diphosphate. Its pathway is amino-acid biosynthesis; S-adenosyl-L-methionine biosynthesis; S-adenosyl-L-methionine from L-methionine: step 1/1. Functionally, catalyzes the formation of S-adenosylmethionine from methionine and ATP. The reaction comprises two steps that are both catalyzed by the same enzyme: formation of S-adenosylmethionine (AdoMet) and triphosphate, and subsequent hydrolysis of the triphosphate. This is S-adenosylmethionine synthase 1 (SAM1) from Oryza sativa subsp. japonica (Rice).